The chain runs to 420 residues: Histidine--tRNA ligase (420 aa).

This sequence belongs to the class-II aminoacyl-tRNA synthetase family. Homodimer.

It is found in the cytoplasm. It carries out the reaction tRNA(His) + L-histidine + ATP = L-histidyl-tRNA(His) + AMP + diphosphate + H(+). The chain is Histidine--tRNA ligase (hisS) from Thermotoga maritima (strain ATCC 43589 / DSM 3109 / JCM 10099 / NBRC 100826 / MSB8).